We begin with the raw amino-acid sequence, 401 residues long: Beta-ketoadipyl-CoA thiolase (401 aa).

Cys91 acts as the Acyl-thioester intermediate in catalysis. Active-site proton acceptor residues include His357 and Cys387.

It belongs to the thiolase-like superfamily. Thiolase family. In terms of assembly, homotetramer.

It carries out the reaction succinyl-CoA + acetyl-CoA = 3-oxoadipyl-CoA + CoA. It functions in the pathway aromatic compound metabolism; beta-ketoadipate pathway; acetyl-CoA and succinyl-CoA from 3-oxoadipate: step 2/2. Its function is as follows. Catalyzes thiolytic cleavage of beta-ketoadipyl-CoA to succinyl-CoA and acetyl-CoA. This Pseudomonas knackmussii (strain DSM 6978 / CCUG 54928 / LMG 23759 / B13) protein is Beta-ketoadipyl-CoA thiolase (pcaF).